A 386-amino-acid chain; its full sequence is LL-diaminopimelate aminotransferase (386 aa).

Substrate is bound by residues Tyr13 and Gly38. Residues Tyr67, 101 to 102 (SK), Tyr126, Asn176, Tyr207, and 235 to 237 (SLS) contribute to the pyridoxal 5'-phosphate site. Residues Lys102, Tyr126, and Asn176 each contribute to the substrate site. The residue at position 238 (Lys238) is an N6-(pyridoxal phosphate)lysine. Arg246 is a binding site for pyridoxal 5'-phosphate. Arg364 serves as a coordination point for substrate.

Belongs to the class-I pyridoxal-phosphate-dependent aminotransferase family. LL-diaminopimelate aminotransferase subfamily. As to quaternary structure, homodimer. Requires pyridoxal 5'-phosphate as cofactor.

The enzyme catalyses (2S,6S)-2,6-diaminopimelate + 2-oxoglutarate = (S)-2,3,4,5-tetrahydrodipicolinate + L-glutamate + H2O + H(+). It functions in the pathway amino-acid biosynthesis; L-lysine biosynthesis via DAP pathway; LL-2,6-diaminopimelate from (S)-tetrahydrodipicolinate (aminotransferase route): step 1/1. In terms of biological role, involved in the synthesis of meso-diaminopimelate (m-DAP or DL-DAP), required for both lysine and peptidoglycan biosynthesis. Catalyzes the direct conversion of tetrahydrodipicolinate to LL-diaminopimelate. The protein is LL-diaminopimelate aminotransferase of Natranaerobius thermophilus (strain ATCC BAA-1301 / DSM 18059 / JW/NM-WN-LF).